Reading from the N-terminus, the 319-residue chain is Ribonuclease Z (319 aa).

7 residues coordinate Zn(2+): His-62, His-64, Asp-66, His-67, His-145, Asp-215, and His-273. The Proton acceptor role is filled by Asp-66.

It belongs to the RNase Z family. In terms of assembly, homodimer. Zn(2+) serves as cofactor.

The catalysed reaction is Endonucleolytic cleavage of RNA, removing extra 3' nucleotides from tRNA precursor, generating 3' termini of tRNAs. A 3'-hydroxy group is left at the tRNA terminus and a 5'-phosphoryl group is left at the trailer molecule.. Functionally, zinc phosphodiesterase, which displays some tRNA 3'-processing endonuclease activity. Probably involved in tRNA maturation, by removing a 3'-trailer from precursor tRNA. In Borrelia hermsii (strain HS1 / DAH), this protein is Ribonuclease Z.